A 112-amino-acid polypeptide reads, in one-letter code: Tyrosine-protein phosphatase 8 (112 aa).

In terms of domain architecture, Tyrosine-protein phosphatase spans 1 to 112 (ENSTAIVMIT…ANSEYGPVVV (112 aa)).

The protein belongs to the protein-tyrosine phosphatase family.

It catalyses the reaction O-phospho-L-tyrosyl-[protein] + H2O = L-tyrosyl-[protein] + phosphate. The sequence is that of Tyrosine-protein phosphatase 8 (STY-8) from Styela plicata (Wrinkled sea squirt).